Reading from the N-terminus, the 659-residue chain is tRNA (guanine(26)-N(2))-dimethyltransferase (659 aa).

The transit peptide at 1–23 (MQGSSLWLSLTFRSARVLSRARF) directs the protein to the mitochondrion. The Trm1 methyltransferase domain occupies 55 to 499 (TTVTEGAAKI…APASALWDIM (445 aa)). S-adenosyl-L-methionine is bound at residue Arg82. At Ser120 the chain carries Phosphoserine. S-adenosyl-L-methionine-binding residues include Arg166 and Asp184. The Zn(2+) site is built by Cys348, Cys351, Cys384, and Cys387. Ser517 carries the phosphoserine modification. Disordered regions lie at residues 537–578 (EDAN…AMEE) and 616–659 (RGDQ…PGID). The Nuclear localization signal signature appears at 543–575 (SRQRGLKRFQANPEANWGPRPRARPGGKAADEA). The segment at 600 to 627 (RLKTFPCKRFKEGTCQRGDQCCYSHSPP) adopts a C3H1-type zinc-finger fold. Phosphoserine is present on Ser625. A phosphothreonine mark is found at Thr628 and Thr646.

It belongs to the class I-like SAM-binding methyltransferase superfamily. Trm1 family. (Microbial infection) Cleaved between Gln-530 and Ala-531 by the 3C-like proteinase nsp5 from human coronavirus SARS-CoV-2, leading to its inactivation.

The protein localises to the mitochondrion. It localises to the nucleus. The protein resides in the cytoplasm. The enzyme catalyses guanosine(26) in tRNA + 2 S-adenosyl-L-methionine = N(2)-dimethylguanosine(26) in tRNA + 2 S-adenosyl-L-homocysteine + 2 H(+). In terms of biological role, dimethylates a single guanine residue at position 26 of most nuclear- and mitochondrial-encoded tRNAs using S-adenosyl-L-methionine as donor of the methyl groups. tRNA guanine(26)-dimethylation is required for redox homeostasis and ensure proper cellular proliferation and oxidative stress survival. The polypeptide is tRNA (guanine(26)-N(2))-dimethyltransferase (Homo sapiens (Human)).